The chain runs to 353 residues: COMPASS component SPP1 (353 aa).

The PHD-type zinc finger occupies Asp22–Gly72. Residues Cys25, Cys27, Cys39, Cys42, His47, Cys50, Cys66, and Cys69 each contribute to the Zn(2+) site. Positions Asn83–Asp124 are non coventional C3H-type zinc finger. Position 87 is a phosphoserine (Ser87). Zn(2+)-binding residues include Cys97, Cys102, Cys113, and His117. A compositionally biased stretch (basic and acidic residues) spans Val235 to Gly244. The interval Val235–Arg255 is disordered. A compositionally biased stretch (basic residues) spans Thr245–Arg255.

In terms of assembly, component of the Set1C/COMPASS complex which consists of SET1(2), BRE2(2), SPP1(2), SDC1(1), SHG1(1), SWD1(1), SWD2(1), and SWD3(1).

The protein resides in the nucleus. In terms of biological role, component of the Set1C/COMPASS complex that specifically mono-, di- and trimethylates histone H3 to form H3K4me1/2/3, which subsequently plays a role in telomere length maintenance and transcription elongation regulation. COMPASS recognizes ubiquitinated H2B on one face of the nucleosome which stimulates the methylation of H3 on the opposing face. SPP1/CPS40 can recognize methylated histone lysine residue H3K4me3 or unmethylated H3K4. Stimulates the RNA binding activity of SET1. The sequence is that of COMPASS component SPP1 from Saccharomyces cerevisiae (strain ATCC 204508 / S288c) (Baker's yeast).